Here is a 526-residue protein sequence, read N- to C-terminus: Amino acid transporter AVT1E (526 aa).

Residues 1–49 (MKQNETFDQEREDLYHTFDEEDEESQTESSVPSTPLSRNRSEDVPVPWP) are disordered. Positions 8-18 (DQEREDLYHTF) are enriched in basic and acidic residues. The next 11 membrane-spanning stretches (helical) occupy residues 140 to 160 (SVLN…PYAV), 165 to 185 (WLGL…GILL), 212 to 232 (ILVS…YIIM), 253 to 273 (LDST…TVWL), 278 to 298 (LLSY…LCLF), 320 to 340 (IPVA…FPNI), 353 to 373 (VLLI…VCGF), 397 to 417 (IAVW…ITPV), 436 to 456 (GVSM…ALTV), 458 to 478 (FFAT…ALIF), and 494 to 514 (FQIG…CCGT).

The protein belongs to the amino acid/polyamine transporter 2 family. Amino acid/auxin permease (AAAP) (TC 2.A.18.5) subfamily.

The protein resides in the membrane. This is Amino acid transporter AVT1E from Arabidopsis thaliana (Mouse-ear cress).